Reading from the N-terminus, the 161-residue chain is Protein-export protein SecB (161 aa).

Belongs to the SecB family. Homotetramer, a dimer of dimers. One homotetramer interacts with 1 SecA dimer.

Its subcellular location is the cytoplasm. One of the proteins required for the normal export of preproteins out of the cell cytoplasm. It is a molecular chaperone that binds to a subset of precursor proteins, maintaining them in a translocation-competent state. It also specifically binds to its receptor SecA. This chain is Protein-export protein SecB, found in Shewanella pealeana (strain ATCC 700345 / ANG-SQ1).